The primary structure comprises 191 residues: Peptidyl-tRNA hydrolase (191 aa).

Tyr-16 contributes to the tRNA binding site. His-21 serves as the catalytic Proton acceptor. TRNA contacts are provided by Tyr-67, Asn-69, and Asn-115.

The protein belongs to the PTH family. Monomer.

It localises to the cytoplasm. It catalyses the reaction an N-acyl-L-alpha-aminoacyl-tRNA + H2O = an N-acyl-L-amino acid + a tRNA + H(+). Hydrolyzes ribosome-free peptidyl-tRNAs (with 1 or more amino acids incorporated), which drop off the ribosome during protein synthesis, or as a result of ribosome stalling. In terms of biological role, catalyzes the release of premature peptidyl moieties from peptidyl-tRNA molecules trapped in stalled 50S ribosomal subunits, and thus maintains levels of free tRNAs and 50S ribosomes. The polypeptide is Peptidyl-tRNA hydrolase (Wigglesworthia glossinidia brevipalpis).